The chain runs to 194 residues: Imidazoleglycerol-phosphate dehydratase (194 aa).

This sequence belongs to the imidazoleglycerol-phosphate dehydratase family.

It is found in the cytoplasm. It carries out the reaction D-erythro-1-(imidazol-4-yl)glycerol 3-phosphate = 3-(imidazol-4-yl)-2-oxopropyl phosphate + H2O. It participates in amino-acid biosynthesis; L-histidine biosynthesis; L-histidine from 5-phospho-alpha-D-ribose 1-diphosphate: step 6/9. The polypeptide is Imidazoleglycerol-phosphate dehydratase (Bacillus anthracis (strain A0248)).